A 110-amino-acid polypeptide reads, in one-letter code: U1-lycotoxin-Ls1aa (110 aa).

The N-terminal stretch at 1-20 is a signal peptide; sequence MKFVLLFGVLLVTLFSYSSA. Residues 21 to 44 constitute a propeptide that is removed on maturation; the sequence is EMLDDFDQADEDELLSLIEKEEAR. Intrachain disulfides connect Cys47/Cys62, Cys54/Cys71, Cys61/Cys89, and Cys73/Cys87.

Belongs to the neurotoxin 19 (CSTX) family. 03 subfamily. Expressed by the venom gland.

It is found in the secreted. The chain is U1-lycotoxin-Ls1aa from Lycosa singoriensis (Wolf spider).